The chain runs to 360 residues: Phosphoserine aminotransferase (360 aa).

R41 lines the L-glutamate pocket. Pyridoxal 5'-phosphate contacts are provided by W101, T152, D172, and Q195. K196 carries the N6-(pyridoxal phosphate)lysine modification. A pyridoxal 5'-phosphate-binding site is contributed by 237 to 238 (NT).

This sequence belongs to the class-V pyridoxal-phosphate-dependent aminotransferase family. SerC subfamily. In terms of assembly, homodimer. The cofactor is pyridoxal 5'-phosphate.

It localises to the cytoplasm. The catalysed reaction is O-phospho-L-serine + 2-oxoglutarate = 3-phosphooxypyruvate + L-glutamate. It catalyses the reaction 4-(phosphooxy)-L-threonine + 2-oxoglutarate = (R)-3-hydroxy-2-oxo-4-phosphooxybutanoate + L-glutamate. Its pathway is amino-acid biosynthesis; L-serine biosynthesis; L-serine from 3-phospho-D-glycerate: step 2/3. The protein operates within cofactor biosynthesis; pyridoxine 5'-phosphate biosynthesis; pyridoxine 5'-phosphate from D-erythrose 4-phosphate: step 3/5. Its function is as follows. Catalyzes the reversible conversion of 3-phosphohydroxypyruvate to phosphoserine and of 3-hydroxy-2-oxo-4-phosphonooxybutanoate to phosphohydroxythreonine. The protein is Phosphoserine aminotransferase of Paraburkholderia phymatum (strain DSM 17167 / CIP 108236 / LMG 21445 / STM815) (Burkholderia phymatum).